We begin with the raw amino-acid sequence, 328 residues long: Malate dehydrogenase (328 aa).

12-18 (GAAGQIG) is an NAD(+) binding site. Positions 95 and 101 each coordinate substrate. NAD(+) is bound by residues Asn108, Gln115, and 132–134 (VGN). 2 residues coordinate substrate: Asn134 and Arg165. The Proton acceptor role is filled by His190.

This sequence belongs to the LDH/MDH superfamily. MDH type 2 family.

It carries out the reaction (S)-malate + NAD(+) = oxaloacetate + NADH + H(+). Functionally, catalyzes the reversible oxidation of malate to oxaloacetate. In Paracidovorax citrulli (strain AAC00-1) (Acidovorax citrulli), this protein is Malate dehydrogenase.